The chain runs to 337 residues: MNTEATHDQNEALTTGARLRNAREQLGLSQQAVAERLCLKVSTVRDIEEDKAPADLASTFLRGYIRSYARLVHIPEEELLPGLEKQAPLRAAKVAPMQSFSLGKRRKKRDGWLMTFTWLVLFVVIGLSGAWWWQDHKAQQEEITTMADQSSAELSSNSEQGQSVPLNTSTTTDPATTSTPPASVDTTATNTQTPAVTAPAPAVDPQQNAVVSPSQANVDTAATPAPTAATTPDGAAPLPTDQAGVTTPVADPNALVMNFTADCWLEVTDATGKRLFSGMQRKDGNLNLTGQAPYKLKIGAPAAVQIQYQGKPVDLSRFIRTNQVARLTLNAEQSPAQ.

Residues 1–111 (MNTEATHDQN…LGKRRKKRDG (111 aa)) lie on the Cytoplasmic side of the membrane. The HTH cro/C1-type domain occupies 19-71 (LRNAREQLGLSQQAVAERLCLKVSTVRDIEEDKAPADLASTFLRGYIRSYARL). The H-T-H motif DNA-binding region spans 30–49 (QQAVAERLCLKVSTVRDIEE). A helical; Signal-anchor for type II membrane protein transmembrane segment spans residues 112–132 (WLMTFTWLVLFVVIGLSGAWW). The Periplasmic segment spans residues 133-337 (WQDHKAQQEE…TLNAEQSPAQ (205 aa)). Residues 145–167 (TMADQSSAELSSNSEQGQSVPLN) show a composition bias toward polar residues. The tract at residues 145–236 (TMADQSSAEL…TAATTPDGAA (92 aa)) is disordered. Over residues 168–207 (TSTTTDPATTSTPPASVDTTATNTQTPAVTAPAPAVDPQQ) the composition is skewed to low complexity. A compositionally biased stretch (polar residues) spans 208–218 (NAVVSPSQANV). Positions 219–236 (DTAATPAPTAATTPDGAA) are enriched in low complexity.

The protein belongs to the RodZ family.

The protein resides in the cell inner membrane. Its function is as follows. Cytoskeletal protein that is involved in cell-shape control through regulation of the length of the long axis. The polypeptide is Cytoskeleton protein RodZ (Escherichia coli O139:H28 (strain E24377A / ETEC)).